We begin with the raw amino-acid sequence, 396 residues long: Phosphopentomutase (396 aa).

Residues aspartate 14, aspartate 286, histidine 291, aspartate 327, histidine 328, and histidine 339 each coordinate Mn(2+).

Belongs to the phosphopentomutase family. Mn(2+) serves as cofactor.

The protein localises to the cytoplasm. It catalyses the reaction 2-deoxy-alpha-D-ribose 1-phosphate = 2-deoxy-D-ribose 5-phosphate. The catalysed reaction is alpha-D-ribose 1-phosphate = D-ribose 5-phosphate. The protein operates within carbohydrate degradation; 2-deoxy-D-ribose 1-phosphate degradation; D-glyceraldehyde 3-phosphate and acetaldehyde from 2-deoxy-alpha-D-ribose 1-phosphate: step 1/2. Isomerase that catalyzes the conversion of deoxy-ribose 1-phosphate (dRib-1-P) and ribose 1-phosphate (Rib-1-P) to deoxy-ribose 5-phosphate (dRib-5-P) and ribose 5-phosphate (Rib-5-P), respectively. This Staphylococcus carnosus (strain TM300) protein is Phosphopentomutase.